The chain runs to 459 residues: Interleukin-7 receptor subunit alpha (459 aa).

An N-terminal signal peptide occupies residues 1 to 20; the sequence is MTILGTTFGMVFSLLQVVSG. At 21-239 the chain is on the extracellular side; that stretch reads ESGYAQNGDL…EINNSSGEMD (219 aa). A disulfide bridge links Cys-42 with Cys-57. N-linked (GlcNAc...) asparagine glycans are attached at residues Asn-49 and Asn-65. Cystine bridges form between Cys-74–Cys-82 and Cys-108–Cys-118. The 101-residue stretch at 131 to 231 folds into the Fibronectin type-III domain; it reads APFDLSVVYR…PSYYFRTPEI (101 aa). 2 N-linked (GlcNAc...) asparagine glycosylation sites follow: Asn-151 and Asn-182. The WSXWS motif motif lies at 217–221; it reads WSEWS. N-linked (GlcNAc...) asparagine glycans are attached at residues Asn-232 and Asn-233. A helical membrane pass occupies residues 240-264; the sequence is PILLTISILSFFSVALLVILACVLW. Residues 265-459 lie on the Cytoplasmic side of the membrane; it reads KKRIKPIVWP…VTMSSFYQNQ (195 aa). The Box 1 motif motif lies at 272–280; sequence VWPSLPDHK. Thr-282 bears the Phosphothreonine; by PKC mark.

It belongs to the type I cytokine receptor family. Type 4 subfamily. In terms of assembly, the IL7 receptor is a heterodimer of IL7R and IL2RG. The TSLP receptor is a heterodimer of CRLF2 and IL7R. Interacts with CD53. In terms of processing, N-glycosylated IL-7Ralpha binds IL7 300-fold more tightly than the unglycosylated form. Ubiquitinated by MARCHF8; leading to lysosomal degradation.

It localises to the cell membrane. The protein localises to the secreted. In terms of biological role, receptor for interleukin-7. Also acts as a receptor for thymic stromal lymphopoietin (TSLP). In Homo sapiens (Human), this protein is Interleukin-7 receptor subunit alpha (IL7R).